The following is a 251-amino-acid chain: Plant UBX domain-containing protein 1 (251 aa).

Met1 bears the N-acetylmethionine mark. Residues 104–180 form the UBX domain; that stretch reads SKLTKAVIRV…GFVPGAIVYF (77 aa). Residues 212-251 form a disordered region; the sequence is AVEPVESSSEPATVDSSAVPVEHERKSTEKKTTKPKWFKM. Over residues 217–227 the composition is skewed to polar residues; that stretch reads ESSSEPATVDS. Residues 232 to 243 show a composition bias toward basic and acidic residues; sequence VEHERKSTEKKT.

Interacts with CDC48A (non-hexameric) via its UBX-containing C-terminal domain.

It is found in the cytoplasm. Its function is as follows. Regulates CDC48A by inhibiting its ATPase activity and by promoting the disassembly of the active hexamer. This Arabidopsis thaliana (Mouse-ear cress) protein is Plant UBX domain-containing protein 1.